A 64-amino-acid chain; its full sequence is Leader peptide SpeFL (64 aa).

The Ornithine recognition loop motif lies at 32 to 38 (HIRRTRH). Arginine 35 is an L-ornithine binding site.

The protein belongs to the speF operon leader peptide family. In terms of assembly, binds ornithine in stalled 70S ribosomes, blocking the upper two-thirds of the exit tunnel. Contacts 23S rRNA and ribosomal proteins L4 and L22.

Its function is as follows. A small protein (arrest peptide) encoded upstream of inducible ornithine carboxylase gene (speF) that controls expression of downstream genes (usually speF and potE) by transcriptional and translational attenuation. The protein is Leader peptide SpeFL of Haemophilus influenzae (strain ATCC 51907 / DSM 11121 / KW20 / Rd).